Here is a 433-residue protein sequence, read N- to C-terminus: 3-deoxy-D-manno-octulosonic acid transferase (433 aa).

The chain crosses the membrane as a helical; Signal-anchor span at residues 11 to 31; that stretch reads TFLYDCFLIFAFMVGLPRILY. The active-site Proton acceptor is E70. CMP is bound by residues 277 to 278, 317 to 319, and 344 to 347; these read PR, IGW, and NLLE.

The protein belongs to the glycosyltransferase group 1 family. Glycosyltransferase 30 subfamily.

The protein resides in the cell inner membrane. The catalysed reaction is lipid IVA (E. coli) + CMP-3-deoxy-beta-D-manno-octulosonate = alpha-Kdo-(2-&gt;6)-lipid IVA (E. coli) + CMP + H(+). It catalyses the reaction alpha-Kdo-(2-&gt;6)-lipid IVA (E. coli) + CMP-3-deoxy-beta-D-manno-octulosonate = alpha-Kdo-(2-&gt;4)-alpha-Kdo-(2-&gt;6)-lipid IVA (E. coli) + CMP + H(+). It carries out the reaction alpha-Kdo-(2-&gt;4)-alpha-Kdo-(2-&gt;6)-lipid IVA (E. coli) + CMP-3-deoxy-beta-D-manno-octulosonate = alpha-Kdo-(2-&gt;8)-alpha-Kdo-(2-&gt;4)-alpha-Kdo-(2-&gt;6)-lipid IVA (E. coli) + CMP + H(+). The enzyme catalyses alpha-Kdo-(2-&gt;8)-alpha-Kdo-(2-&gt;4)-alpha-Kdo-(2-&gt;6)-lipid IVA (E. coli) + CMP-3-deoxy-beta-D-manno-octulosonate = alpha-Kdo-(2-&gt;8)-[alpha-Kdo-(2-&gt;4)]-alpha-Kdo-(2-&gt;4)-alpha-Kdo-(2-&gt;6)-lipid IVA + CMP + H(+). Its pathway is bacterial outer membrane biogenesis; LPS core biosynthesis. In terms of biological role, involved in lipopolysaccharide (LPS) biosynthesis. Catalyzes the transfer of predominantly four 3-deoxy-D-manno-octulosonate (Kdo) residues from CMP-Kdo to lipid IV(A), the tetraacyldisaccharide-1,4'-bisphosphate precursor of lipid A. Thus generates the genus-specific LPS epitope of Chlamydia, composed of the trisaccharide alpha-Kdo-(2-&gt;8)-alpha-Kdo-(2-&gt;4)-alpha-Kdo. The sequence is that of 3-deoxy-D-manno-octulosonic acid transferase (waaA) from Chlamydophila psittaci (strain ATCC VR-125 / 6BC) (Chlamydia psittaci).